Consider the following 91-residue polypeptide: Acylphosphatase (91 aa).

Residues 4–91 (RAIVTIKGLV…GEFDDFDVRY (88 aa)) form the Acylphosphatase-like domain. Active-site residues include arginine 19 and asparagine 37.

It belongs to the acylphosphatase family.

It catalyses the reaction an acyl phosphate + H2O = a carboxylate + phosphate + H(+). The sequence is that of Acylphosphatase (acyP) from Geobacter sulfurreducens (strain ATCC 51573 / DSM 12127 / PCA).